Reading from the N-terminus, the 247-residue chain is Uridylate kinase (247 aa).

19-22 (KISG) serves as a coordination point for ATP. Glycine 61 is a UMP binding site. Residues glycine 62 and arginine 66 each contribute to the ATP site. UMP is bound by residues aspartate 81 and 142–149 (TGNPFFTT). ATP-binding residues include threonine 169, glutamine 170, tyrosine 175, and aspartate 178.

Belongs to the UMP kinase family. As to quaternary structure, homohexamer.

Its subcellular location is the cytoplasm. The catalysed reaction is UMP + ATP = UDP + ADP. The protein operates within pyrimidine metabolism; CTP biosynthesis via de novo pathway; UDP from UMP (UMPK route): step 1/1. Its activity is regulated as follows. Inhibited by UTP. Catalyzes the reversible phosphorylation of UMP to UDP. This is Uridylate kinase from Wolbachia pipientis wMel.